The sequence spans 234 residues: Carboxy-S-adenosyl-L-methionine synthase (234 aa).

S-adenosyl-L-methionine contacts are provided by residues tyrosine 35, 60-62 (GCS), 83-84 (DN), 109-110 (DI), asparagine 124, and arginine 191.

The protein belongs to the class I-like SAM-binding methyltransferase superfamily. Cx-SAM synthase family. Homodimer.

The enzyme catalyses prephenate + S-adenosyl-L-methionine = carboxy-S-adenosyl-L-methionine + 3-phenylpyruvate + H2O. Catalyzes the conversion of S-adenosyl-L-methionine (SAM) to carboxy-S-adenosyl-L-methionine (Cx-SAM). The polypeptide is Carboxy-S-adenosyl-L-methionine synthase (Campylobacter concisus (strain 13826)).